Consider the following 758-residue polypeptide: 5-methyltetrahydropteroyltriglutamate--homocysteine methyltransferase (758 aa).

Residues R17 to K20 and K117 contribute to the 5-methyltetrahydropteroyltri-L-glutamate site. Residues I434–S436 and E487 contribute to the L-homocysteine site. L-methionine-binding positions include I434–S436 and E487. Residues R518–C519 and W564 each bind 5-methyltetrahydropteroyltri-L-glutamate. Position 602 (D602) interacts with L-homocysteine. D602 contributes to the L-methionine binding site. A 5-methyltetrahydropteroyltri-L-glutamate-binding site is contributed by E608. Residues H644, C646, and E668 each contribute to the Zn(2+) site. H697 (proton donor) is an active-site residue. C729 contributes to the Zn(2+) binding site.

This sequence belongs to the vitamin-B12 independent methionine synthase family. Zn(2+) is required as a cofactor.

The enzyme catalyses 5-methyltetrahydropteroyltri-L-glutamate + L-homocysteine = tetrahydropteroyltri-L-glutamate + L-methionine. Its pathway is amino-acid biosynthesis; L-methionine biosynthesis via de novo pathway; L-methionine from L-homocysteine (MetE route): step 1/1. Functionally, catalyzes the transfer of a methyl group from 5-methyltetrahydrofolate to homocysteine resulting in methionine formation. This Serratia proteamaculans (strain 568) protein is 5-methyltetrahydropteroyltriglutamate--homocysteine methyltransferase.